A 238-amino-acid chain; its full sequence is Large ribosomal subunit protein uL1 (238 aa).

The protein belongs to the universal ribosomal protein uL1 family. As to quaternary structure, part of the 50S ribosomal subunit.

Functionally, binds directly to 23S rRNA. The L1 stalk is quite mobile in the ribosome, and is involved in E site tRNA release. Its function is as follows. Protein L1 is also a translational repressor protein, it controls the translation of the L11 operon by binding to its mRNA. The protein is Large ribosomal subunit protein uL1 of Rippkaea orientalis (strain PCC 8801 / RF-1) (Cyanothece sp. (strain PCC 8801)).